The primary structure comprises 555 residues: F-box protein COS111 (555 aa).

Disordered stretches follow at residues 31-82 (MSVS…SVSN) and 124-147 (DHSI…KQHH). The segment covering 32–42 (SVSSRSSQEES) has biased composition (low complexity). Residues 48–61 (ESVSSLSMQEQQTE) are compositionally biased toward polar residues. Low complexity predominate over residues 129–142 (SGVTRSTVSTVRPT). Residues 196–246 (HKDLNSLPHEIMSKIVSHLDQRDVTMCLYVNKNMYSTAVRQLYKEPFFSST) form the F-box domain. A compositionally biased stretch (low complexity) spans 327–346 (SSSSLSCSRTSSNSNSSTES). Residues 327-354 (SSSSLSCSRTSSNSNSSTESKPVKKRRS) are disordered.

Functionally, F-box protein probably involved in ubiquitin conjugation pathway. The sequence is that of F-box protein COS111 (COS111) from Yarrowia lipolytica (strain CLIB 122 / E 150) (Yeast).